Reading from the N-terminus, the 266-residue chain is Glutamate racemase (266 aa).

Residues 9–10 (DS) and 41–42 (YG) contribute to the substrate site. Residue Cys73 is the Proton donor/acceptor of the active site. Residue 74–75 (NS) participates in substrate binding. Cys183 functions as the Proton donor/acceptor in the catalytic mechanism. Substrate is bound at residue 184 to 185 (TH).

The protein belongs to the aspartate/glutamate racemases family.

The enzyme catalyses L-glutamate = D-glutamate. The protein operates within cell wall biogenesis; peptidoglycan biosynthesis. In terms of biological role, provides the (R)-glutamate required for cell wall biosynthesis. The chain is Glutamate racemase from Shewanella halifaxensis (strain HAW-EB4).